Here is a 252-residue protein sequence, read N- to C-terminus: Protein Flattop homolog (252 aa).

Residues Thr177–His252 are disordered. Basic and acidic residues predominate over residues Pro218–His252.

Belongs to the Flattop family.

This chain is Protein Flattop homolog, found in Drosophila melanogaster (Fruit fly).